The chain runs to 164 residues: Phosphopantetheine adenylyltransferase (164 aa).

Thr-14 is a substrate binding site. Residues 14–15 (TF) and His-22 each bind ATP. Substrate is bound by residues Lys-46, Met-78, and Arg-92. ATP contacts are provided by residues 93–95 (GLR), Glu-103, and 128–134 (HAFISST).

The protein belongs to the bacterial CoaD family. In terms of assembly, homohexamer. Requires Mg(2+) as cofactor.

It is found in the cytoplasm. It carries out the reaction (R)-4'-phosphopantetheine + ATP + H(+) = 3'-dephospho-CoA + diphosphate. The protein operates within cofactor biosynthesis; coenzyme A biosynthesis; CoA from (R)-pantothenate: step 4/5. In terms of biological role, reversibly transfers an adenylyl group from ATP to 4'-phosphopantetheine, yielding dephospho-CoA (dPCoA) and pyrophosphate. In Vibrio vulnificus (strain CMCP6), this protein is Phosphopantetheine adenylyltransferase.